The sequence spans 1062 residues: 3-hydroxy-3-methylglutaryl-coenzyme A reductase 2 (1062 aa).

Residues 1 to 34 (MAPTNTKDSDTPGWLHRHGTSVLGSVARQACKQP) are Cytoplasmic-facing. The chain crosses the membrane as a helical span at residues 35–55 (IYTLVITALLATMTYTSLLEG). The Lumenal segment spans residues 56 to 230 (SLYNANLTRL…SFVGLIKHAQ (175 aa)). Residue asparagine 61 is glycosylated (N-linked (GlcNAc...) asparagine). Residues 231-251 (IIDIIIMLLAYLAMHLTFLSL) form a helical membrane-spanning segment. The SSD domain maps to 233-403 (DIIIMLLAYL…FTFYISVLCV (171 aa)). The Cytoplasmic segment spans residues 252–261 (FMSMRQLGSR). Residues 262–282 (FWLAYSVLLSGFFSLFFGLKV) form a helical membrane-spanning segment. Residues 283-287 (TTSSG) lie on the Lumenal side of the membrane. The helical transmembrane segment at 288–308 (VSTSMITLSECLPILVIIVGF) threads the bilayer. Topologically, residues 309–355 (EKPIRLTRAVLRAATESYLPAKPMARRSTPEAIEVAIMREGWRIVRD) are cytoplasmic. A helical membrane pass occupies residues 356 to 375 (YAIEIAILAAGATSRVQGAL). Residues 376–377 (PQ) are Lumenal-facing. The helical transmembrane segment at 378–398 (FCFLAAWILLFDSLLLFTFYI) threads the bilayer. At 399-450 (SVLCVKLEITRIRKHVEPRRALEDDDISTGNQDFDSRVFGCKVKAANISRFK) the chain is on the cytoplasmic side. The chain crosses the membrane as a helical span at residues 451–471 (FLMVGGFVLFNVLQLSSLTYG). Over 472-564 (NVRVSDWMPY…GCVLAWLEDP (93 aa)) the chain is Lumenal. Residue asparagine 484 is glycosylated (N-linked (GlcNAc...) asparagine). Residues 565 to 585 (VISKWVIAALFLSLVLNSYLM) form a helical membrane-spanning segment. Over 586–1062 (KAARWNLRQS…NRSKVAAKTG (477 aa)) the chain is Cytoplasmic. Glutamate 744 (charge relay system) is an active-site residue. A CoA-binding site is contributed by 750-756 (SASRGCK). Residues 811–813 (SRF) and 838–846 (DAMGMNMIS) contribute to the NADP(+) site. Lysine 877 serves as the catalytic Charge relay system. CoA is bound at residue 906–908 (VLK). Aspartate 953 (charge relay system) is an active-site residue. 1048 to 1049 (AH) lines the CoA pocket. Histidine 1049 functions as the Proton donor in the catalytic mechanism. 1053 to 1054 (NR) lines the NADP(+) pocket.

Belongs to the HMG-CoA reductase family.

The protein localises to the endoplasmic reticulum membrane. The catalysed reaction is (R)-mevalonate + 2 NADP(+) + CoA = (3S)-3-hydroxy-3-methylglutaryl-CoA + 2 NADPH + 2 H(+). Its pathway is metabolic intermediate biosynthesis; (R)-mevalonate biosynthesis; (R)-mevalonate from acetyl-CoA: step 3/3. In terms of biological role, HMG-CoA reductase; part of the first module of ergosterol biosynthesis pathway that includes the early steps of the pathway, conserved across all eukaryotes, and which results in the formation of mevalonate from acetyl-coenzyme A (acetyl-CoA). Hmg1 and hmg2 catalyze the reduction of hydroxymethylglutaryl-CoA (HMG-CoA) to mevalonate. The first module starts with the action of the cytosolic acetyl-CoA acetyltransferase erg10B that catalyzes the formation of acetoacetyl-CoA. The hydroxymethylglutaryl-CoA synthases erg13A and erg13B then condense acetyl-CoA with acetoacetyl-CoA to form HMG-CoA. The rate-limiting step of the early module is the reduction to mevalonate by the 3-hydroxy-3-methylglutaryl-coenzyme A (HMG-CoA) reductases hmg1 and hmg2. Mevalonate is also a precursor for the extracellular siderophore triacetylfusarinine C (TAFC). This Aspergillus fumigatus (strain ATCC MYA-4609 / CBS 101355 / FGSC A1100 / Af293) (Neosartorya fumigata) protein is 3-hydroxy-3-methylglutaryl-coenzyme A reductase 2.